The chain runs to 273 residues: Ribosomal RNA small subunit methyltransferase A (273 aa).

S-adenosyl-L-methionine contacts are provided by Asn-18, Leu-20, Gly-45, Glu-66, Asp-91, and Asn-113.

It belongs to the class I-like SAM-binding methyltransferase superfamily. rRNA adenine N(6)-methyltransferase family. RsmA subfamily.

The protein resides in the cytoplasm. The enzyme catalyses adenosine(1518)/adenosine(1519) in 16S rRNA + 4 S-adenosyl-L-methionine = N(6)-dimethyladenosine(1518)/N(6)-dimethyladenosine(1519) in 16S rRNA + 4 S-adenosyl-L-homocysteine + 4 H(+). Functionally, specifically dimethylates two adjacent adenosines (A1518 and A1519) in the loop of a conserved hairpin near the 3'-end of 16S rRNA in the 30S particle. May play a critical role in biogenesis of 30S subunits. The protein is Ribosomal RNA small subunit methyltransferase A of Escherichia coli O81 (strain ED1a).